We begin with the raw amino-acid sequence, 502 residues long: MAWALKLPLADEVIESGLVQDFDASLSGIGQELGAGAYSMSDVLALPIFKQEESSLPPDNENKILPFQYVLCAATSPAVKLHDETLTYLNQGQSYEIRMLDNRKLGELPEINGKLVKSIFRVVFHDRRLQYTEHQQLEGWRWNRPGDRILDIDIPMSVGIIDPRANPTQLNTVEFLWDPAKRTSVFIQVHCISTEFTMRKHGGEKGVPFRVQIDTFKENENGEYTEHLHSASCQIKVFKPKGADRKQKTDREKMEKRTPHEKEKYQPSYETTILTECSPWPEITYVNNSPSPGFNSSHSSFSLGEGNGSPNHQPEPPPPVTDNLLPTTTPQEAQQWLHRNRFSTFTRLFTNFSGADLLKLTRDDVIQICGPADGIRLFNALKGRMVRPRLTIYVCQESLQLREQQQQQQQQQQKHEDGDSNGTFFVYHAIYLEELTAVELTEKIAQLFSISPCQISQIYKQGPTGIHVLISDEMIQNFQEEACFILDTMKAETNDSYHIILK.

A Grh/CP2 DB domain is found at 61–300; it reads ENKILPFQYV…SPGFNSSHSS (240 aa). The tract at residues 133-395 is DNA-binding; sequence EHQQLEGWRW…VRPRLTIYVC (263 aa). Disordered stretches follow at residues 238 to 268 and 294 to 325; these read FKPK…YQPS and FNSS…DNLL. Positions 241–265 are enriched in basic and acidic residues; sequence KGADRKQKTDREKMEKRTPHEKEKY. Ser-353 bears the Phosphoserine mark.

The protein belongs to the grh/CP2 family. CP2 subfamily. Binds to DNA as a dimer, isoform 3 does not bind to DNA or affect the binding of isoform 1 to DNA. Interacts with UBP1 and PIAS1, and is probably part of a complex containing TFCP2, UBP1 and PIAS1. Component of the SSP (stage selector protein) complex, which appears to be a heteromer of TFCP2 and 2 copies of NFE4. As to expression, ubiquitous. Expressed in brain, ovary, kidney, thymus, spleen, liver, adrenal, heart and lung (at protein level).

Its subcellular location is the nucleus. Binds a variety of cellular and viral promoters including fibrinogen, alpha-globin, SV40 and HIV-1 promoters. Activation of the alpha-globin promoter in erythroid cells is via synergistic interaction with UBP1. Functions as part of the SSP (stage selector protein) complex. Facilitates the interaction of the gamma-globin genes with enhancer elements contained in the locus control region in fetal erythroid cells. Interacts by binding to the stage selector element (SSE) in the proximal gamma-globin promoter. The sequence is that of Alpha-globin transcription factor CP2 (TFCP2) from Homo sapiens (Human).